A 151-amino-acid polypeptide reads, in one-letter code: CD-NTase-associated protein 19 (151 aa).

Helical transmembrane passes span 25-45, 52-72, and 127-147; these read TVFN…GVTL, VLFT…FWKL, and ISFV…FLMK.

It belongs to the Cap19 family.

The protein resides in the cell inner membrane. Membrane protein component of a CBASS (cyclic oligonucleotide-based antiphage signaling system) which provides immunity against bacteriophage. The CD-NTase protein synthesizes cyclic nucleotides in response to infection; these serve as specific second messenger signals. The signals activate a diverse range of effectors, leading to bacterial cell death and thus abortive phage infection. A type III CBASS system. Expression of this CBASS system (Cap17-CapW-CdnC-Cap7-Cap6-Cap18-Cap19) in a susceptible E.coli (strain JP313) confers resistance to bacteriophage lambda cI-. The sequence is that of CD-NTase-associated protein 19 from Escherichia coli.